The sequence spans 319 residues: Formimidoylglutamase (319 aa).

Positions 131, 154, 156, 158, 248, and 250 each coordinate Mn(2+).

The protein belongs to the arginase family. Mn(2+) is required as a cofactor.

It carries out the reaction N-formimidoyl-L-glutamate + H2O = formamide + L-glutamate. It functions in the pathway amino-acid degradation; L-histidine degradation into L-glutamate; L-glutamate from N-formimidoyl-L-glutamate (hydrolase route): step 1/1. Functionally, catalyzes the conversion of N-formimidoyl-L-glutamate to L-glutamate and formamide. This chain is Formimidoylglutamase, found in Legionella pneumophila (strain Lens).